We begin with the raw amino-acid sequence, 264 residues long: Acyl-[acyl-carrier-protein]--UDP-N-acetylglucosamine O-acyltransferase (264 aa).

Belongs to the transferase hexapeptide repeat family. LpxA subfamily. In terms of assembly, homotrimer.

Its subcellular location is the cytoplasm. It carries out the reaction a (3R)-hydroxyacyl-[ACP] + UDP-N-acetyl-alpha-D-glucosamine = a UDP-3-O-[(3R)-3-hydroxyacyl]-N-acetyl-alpha-D-glucosamine + holo-[ACP]. Its pathway is glycolipid biosynthesis; lipid IV(A) biosynthesis; lipid IV(A) from (3R)-3-hydroxytetradecanoyl-[acyl-carrier-protein] and UDP-N-acetyl-alpha-D-glucosamine: step 1/6. Involved in the biosynthesis of lipid A, a phosphorylated glycolipid that anchors the lipopolysaccharide to the outer membrane of the cell. The sequence is that of Acyl-[acyl-carrier-protein]--UDP-N-acetylglucosamine O-acyltransferase from Rickettsia typhi (strain ATCC VR-144 / Wilmington).